The primary structure comprises 507 residues: Glucose-6-phosphate 1-dehydrogenase (507 aa).

Residues R57 and K168 each coordinate NADP(+). Substrate-binding residues include H198, K202, E236, and D255. H260 acts as the Proton acceptor in catalysis. K356 provides a ligand contact to substrate.

The protein belongs to the glucose-6-phosphate dehydrogenase family.

The catalysed reaction is D-glucose 6-phosphate + NADP(+) = 6-phospho-D-glucono-1,5-lactone + NADPH + H(+). Its pathway is carbohydrate degradation; pentose phosphate pathway; D-ribulose 5-phosphate from D-glucose 6-phosphate (oxidative stage): step 1/3. Its function is as follows. Catalyzes the oxidation of glucose 6-phosphate to 6-phosphogluconolactone. The sequence is that of Glucose-6-phosphate 1-dehydrogenase from Chlamydia muridarum (strain MoPn / Nigg).